A 308-amino-acid chain; its full sequence is Ribosomal protein L11 methyltransferase (308 aa).

S-adenosyl-L-methionine-binding residues include Thr-157, Gly-178, Asp-200, and Asn-243.

The protein belongs to the methyltransferase superfamily. PrmA family.

Its subcellular location is the cytoplasm. The catalysed reaction is L-lysyl-[protein] + 3 S-adenosyl-L-methionine = N(6),N(6),N(6)-trimethyl-L-lysyl-[protein] + 3 S-adenosyl-L-homocysteine + 3 H(+). Methylates ribosomal protein L11. The polypeptide is Ribosomal protein L11 methyltransferase (Desulforamulus reducens (strain ATCC BAA-1160 / DSM 100696 / MI-1) (Desulfotomaculum reducens)).